The following is a 106-amino-acid chain: uncharacterized protein (106 aa).

Topologically, residues 1 to 6 are cytoplasmic; sequence MYQTSP. The chain crosses the membrane as a helical span at residues 7-27; the sequence is LSLFYFQVLVPKFLECFLCFP. Residues 28–32 lie on the Extracellular side of the membrane; the sequence is YHKIS. Residues 33–53 form a helical membrane-spanning segment; the sequence is LVALLSFFYCQLQTNMIILLS. The Cytoplasmic portion of the chain corresponds to 54–73; that stretch reads QIKRFLYRQIMIALKIKAKK. A helical membrane pass occupies residues 74-94; it reads FWFIFKYFNVSCDARLFNELF. Residues 95-106 are Extracellular-facing; the sequence is YIFQTYVSVDSK.

The protein localises to the membrane. This is an uncharacterized protein from Saccharomyces cerevisiae (strain ATCC 204508 / S288c) (Baker's yeast).